The chain runs to 336 residues: Anthranilate phosphoribosyltransferase (336 aa).

Residues G79, 82–83 (GD), T87, 89–92 (NIST), 107–115 (KHGNRSVSS), and S119 each bind 5-phospho-alpha-D-ribose 1-diphosphate. Position 79 (G79) interacts with anthranilate. Mg(2+) is bound at residue S91. N110 provides a ligand contact to anthranilate. R165 is a binding site for anthranilate. Mg(2+) is bound by residues D224 and E225.

Belongs to the anthranilate phosphoribosyltransferase family. As to quaternary structure, homodimer. Mg(2+) serves as cofactor.

The catalysed reaction is N-(5-phospho-beta-D-ribosyl)anthranilate + diphosphate = 5-phospho-alpha-D-ribose 1-diphosphate + anthranilate. It functions in the pathway amino-acid biosynthesis; L-tryptophan biosynthesis; L-tryptophan from chorismate: step 2/5. Catalyzes the transfer of the phosphoribosyl group of 5-phosphorylribose-1-pyrophosphate (PRPP) to anthranilate to yield N-(5'-phosphoribosyl)-anthranilate (PRA). In Endomicrobium trichonymphae, this protein is Anthranilate phosphoribosyltransferase.